Consider the following 331-residue polypeptide: GTP 3',8-cyclase (331 aa).

The region spanning 9 to 233 is the Radical SAM core domain; the sequence is SFGRQVTYVR…TATNEHTGGP (225 aa). Residue Arg-18 coordinates GTP. [4Fe-4S] cluster-binding residues include Cys-25 and Cys-29. Tyr-31 contacts S-adenosyl-L-methionine. Cys-32 contributes to the [4Fe-4S] cluster binding site. Arg-67 is a binding site for GTP. Position 71 (Gly-71) interacts with S-adenosyl-L-methionine. Thr-98 contacts GTP. Ser-122 contributes to the S-adenosyl-L-methionine binding site. GTP is bound at residue Lys-159. Met-193 provides a ligand contact to S-adenosyl-L-methionine. Residues Cys-257 and Cys-260 each coordinate [4Fe-4S] cluster. 262–264 is a binding site for GTP; the sequence is RVR. Cys-274 provides a ligand contact to [4Fe-4S] cluster.

It belongs to the radical SAM superfamily. MoaA family. In terms of assembly, monomer and homodimer. [4Fe-4S] cluster is required as a cofactor.

It catalyses the reaction GTP + AH2 + S-adenosyl-L-methionine = (8S)-3',8-cyclo-7,8-dihydroguanosine 5'-triphosphate + 5'-deoxyadenosine + L-methionine + A + H(+). It participates in cofactor biosynthesis; molybdopterin biosynthesis. Catalyzes the cyclization of GTP to (8S)-3',8-cyclo-7,8-dihydroguanosine 5'-triphosphate. This chain is GTP 3',8-cyclase, found in Saccharophagus degradans (strain 2-40 / ATCC 43961 / DSM 17024).